The sequence spans 349 residues: Thiamine thiazole synthase, chloroplastic (349 aa).

The N-terminal 45 residues, 1-45 (MAAIASTLSLSSTKPQRLFDSSFHGSAISAAPISIGLKPRSFSVR), are a transit peptide targeting the chloroplast. Substrate-binding positions include alanine 94, 114–115 (EQ), glycine 122, and alanine 187. Cysteine 216 carries the post-translational modification 2,3-didehydroalanine (Cys). Residues aspartate 218, histidine 233, methionine 285, and 295–297 (RMG) each bind substrate.

The protein belongs to the THI4 family. In terms of assembly, homooctamer. Interacts with RBCX1 and RBCX1. Interacts with CPK33. Fe cation serves as cofactor. In terms of processing, during the catalytic reaction, a sulfide is transferred from Cys-216 to a reaction intermediate, generating a dehydroalanine residue. Not phosphorylated in vitro by CPK33. In terms of tissue distribution, expressed at high levels in chloroplast-containing parenchymatic cells of leaves, inflorescence shoots and flowers, and at lower levels in the vascular system. In young plants, detected in roots and shoots including cotyledons, leaves and hypocotyls. Also observed in apical meristematic regions, siliques and embryos. Low expression in roots, limited to the vascular tissue. Broadly expressed in roots, cotyledons, leaves, hypocotyls, inflorescences, siliques, and strongly in guard cells.

It localises to the plastid. The protein resides in the chloroplast. It is found in the mitochondrion. The protein localises to the cell membrane. The catalysed reaction is [ADP-thiazole synthase]-L-cysteine + glycine + NAD(+) = [ADP-thiazole synthase]-dehydroalanine + ADP-5-ethyl-4-methylthiazole-2-carboxylate + nicotinamide + 3 H2O + 2 H(+). Its function is as follows. Involved in biosynthesis of the thiamine precursor thiazole. Catalyzes the conversion of NAD and glycine to adenosine diphosphate 5-(2-hydroxyethyl)-4-methylthiazole-2-carboxylic acid (ADT), an adenylated thiazole intermediate. The reaction includes an iron-dependent sulfide transfer from a conserved cysteine residue of the protein to a thiazole intermediate. The enzyme can only undergo a single turnover, which suggests it is a suicide enzyme. May have additional roles in adaptation to various stress conditions and in DNA damage tolerance. Acts as a positive regulator for the abscisic acid-induced activation of slow type anion channels during stomatal closure by repressing CPK33 kinase activity. In Arabidopsis thaliana (Mouse-ear cress), this protein is Thiamine thiazole synthase, chloroplastic.